The sequence spans 610 residues: Dopamine beta-hydroxylase (610 aa).

Over Met-1–Arg-9 the chain is Cytoplasmic. The chain crosses the membrane as a helical; Signal-anchor for type II membrane protein span at residues Glu-10–Leu-30. Topologically, residues Gln-31 to Gly-610 are intragranular. The DOMON domain occupies Gly-50–Leu-166. Disulfide bonds link Cys-147–Cys-589, Cys-225–Cys-276, Cys-262–Cys-288, Cys-383–Cys-496, Cys-387–Cys-558, and Cys-459–Cys-481. Asn-177 carries an N-linked (GlcNAc...) asparagine glycan. Tyr-223 is an active-site residue. Cu(2+)-binding residues include His-255 and His-256. Cu(2+) is bound by residues His-326, His-405, His-407, and Met-480. The active site involves His-405. An N-linked (GlcNAc...) asparagine glycan is attached at Asn-559. The segment at Pro-585–Gly-610 is disordered.

Belongs to the copper type II ascorbate-dependent monooxygenase family. As to quaternary structure, homotetramer; composed of two disulfide-linked dimers. Cu(2+) is required as a cofactor. In terms of processing, proteolytic cleavage after the membrane-anchor leads to the release of the soluble form. N-glycosylated. In terms of tissue distribution, detected in chromaffin granules in the adrenal medulla (at protein level). Detected in adrenal medulla.

It localises to the cytoplasmic vesicle. The protein resides in the secretory vesicle lumen. The protein localises to the secretory vesicle. Its subcellular location is the chromaffin granule lumen. It is found in the secretory vesicle membrane. It localises to the chromaffin granule membrane. The catalysed reaction is dopamine + 2 L-ascorbate + O2 = (R)-noradrenaline + 2 monodehydro-L-ascorbate radical + H2O. It participates in catecholamine biosynthesis; (R)-noradrenaline biosynthesis; (R)-noradrenaline from dopamine: step 1/1. Functionally, catalyzes the hydroxylation of dopamine to noradrenaline (also known as norepinephrine), and is thus vital for regulation of these neurotransmitters. The chain is Dopamine beta-hydroxylase (DBH) from Bos taurus (Bovine).